A 120-amino-acid polypeptide reads, in one-letter code: Large ribosomal subunit protein bL19 (120 aa).

Belongs to the bacterial ribosomal protein bL19 family.

This protein is located at the 30S-50S ribosomal subunit interface and may play a role in the structure and function of the aminoacyl-tRNA binding site. This chain is Large ribosomal subunit protein bL19, found in Gloeothece citriformis (strain PCC 7424) (Cyanothece sp. (strain PCC 7424)).